The following is a 1976-amino-acid chain: Protein TIC 214 (1976 aa).

The next 6 membrane-spanning stretches (helical) occupy residues 11-31, 64-84, 87-107, 126-146, 173-193, and 221-241; these read LLLL…YYGF, FIMG…HLAL, PHTL…FFWN, LSIQ…HFVL, FFGW…VLSW, and IFSI…PSPI. Residues 619 to 635 are compositionally biased toward acidic residues; sequence FEEEEEEEEEDDQEEST. Disordered regions lie at residues 619-642 and 830-861; these read FEEE…GIRS and SSYV…EDKR. The segment covering 836–861 has biased composition (basic and acidic residues); the sequence is GAKEKEKIEEEHEEEKGEYKRKEDKR. A run of 2 helical transmembrane segments spans residues 1054–1074 and 1202–1222; these read IIKI…FFVL and IYMS…QFFL. Residues 1633 to 1665 show a composition bias toward basic and acidic residues; sequence QKERFHPKPKVESNQKGYLELENRNRDEKERQH. The tract at residues 1633-1669 is disordered; it reads QKERFHPKPKVESNQKGYLELENRNRDEKERQHQGNL.

Belongs to the TIC214 family. In terms of assembly, part of the Tic complex.

It localises to the plastid. The protein localises to the chloroplast inner membrane. Involved in protein precursor import into chloroplasts. May be part of an intermediate translocation complex acting as a protein-conducting channel at the inner envelope. This Nymphaea alba (White water-lily) protein is Protein TIC 214.